A 188-amino-acid polypeptide reads, in one-letter code: Elongation factor P (188 aa).

It belongs to the elongation factor P family.

The protein localises to the cytoplasm. Its pathway is protein biosynthesis; polypeptide chain elongation. Its function is as follows. Involved in peptide bond synthesis. Stimulates efficient translation and peptide-bond synthesis on native or reconstituted 70S ribosomes in vitro. Probably functions indirectly by altering the affinity of the ribosome for aminoacyl-tRNA, thus increasing their reactivity as acceptors for peptidyl transferase. In Methylobacterium radiotolerans (strain ATCC 27329 / DSM 1819 / JCM 2831 / NBRC 15690 / NCIMB 10815 / 0-1), this protein is Elongation factor P.